A 198-amino-acid chain; its full sequence is ATP-dependent Clp protease proteolytic subunit 1 (198 aa).

The active-site Nucleophile is the S98. Residue H123 is part of the active site.

The protein belongs to the peptidase S14 family. In terms of assembly, fourteen ClpP subunits assemble into 2 heptameric rings which stack back to back to give a disk-like structure with a central cavity, resembling the structure of eukaryotic proteasomes.

Its subcellular location is the cytoplasm. The catalysed reaction is Hydrolysis of proteins to small peptides in the presence of ATP and magnesium. alpha-casein is the usual test substrate. In the absence of ATP, only oligopeptides shorter than five residues are hydrolyzed (such as succinyl-Leu-Tyr-|-NHMec, and Leu-Tyr-Leu-|-Tyr-Trp, in which cleavage of the -Tyr-|-Leu- and -Tyr-|-Trp bonds also occurs).. Its function is as follows. Cleaves peptides in various proteins in a process that requires ATP hydrolysis. Has a chymotrypsin-like activity. Plays a major role in the degradation of misfolded proteins. In Leptospira interrogans serogroup Icterohaemorrhagiae serovar copenhageni (strain Fiocruz L1-130), this protein is ATP-dependent Clp protease proteolytic subunit 1.